Here is a 430-residue protein sequence, read N- to C-terminus: 3-phosphoshikimate 1-carboxyvinyltransferase (430 aa).

Lysine 23, serine 24, and arginine 28 together coordinate 3-phosphoshikimate. Lysine 23 contributes to the phosphoenolpyruvate binding site. Glycine 95 and arginine 123 together coordinate phosphoenolpyruvate. 4 residues coordinate 3-phosphoshikimate: serine 169, glutamine 171, aspartate 315, and lysine 342. Residue glutamine 171 coordinates phosphoenolpyruvate. Aspartate 315 functions as the Proton acceptor in the catalytic mechanism. Residues arginine 346 and arginine 388 each contribute to the phosphoenolpyruvate site.

The protein belongs to the EPSP synthase family. As to quaternary structure, monomer.

The protein localises to the cytoplasm. The enzyme catalyses 3-phosphoshikimate + phosphoenolpyruvate = 5-O-(1-carboxyvinyl)-3-phosphoshikimate + phosphate. Its pathway is metabolic intermediate biosynthesis; chorismate biosynthesis; chorismate from D-erythrose 4-phosphate and phosphoenolpyruvate: step 6/7. Functionally, catalyzes the transfer of the enolpyruvyl moiety of phosphoenolpyruvate (PEP) to the 5-hydroxyl of shikimate-3-phosphate (S3P) to produce enolpyruvyl shikimate-3-phosphate and inorganic phosphate. This Streptococcus pyogenes serotype M6 (strain ATCC BAA-946 / MGAS10394) protein is 3-phosphoshikimate 1-carboxyvinyltransferase.